The chain runs to 533 residues: Pre-mRNA-splicing factor cwf24 (533 aa).

The segment covering methionine 1–asparagine 17 has biased composition (polar residues). The interval methionine 1 to glycine 69 is disordered. The segment covering serine 27–phenylalanine 43 has biased composition (basic residues). The segment at aspartate 184–glutamate 212 adopts a C3H1-type zinc-finger fold. An RING-type zinc finger spans residues cysteine 254–glycine 292. The N-acetyltransferase domain maps to tyrosine 379–serine 524.

This sequence belongs to the CWC24 family. As to quaternary structure, belongs to the 40S cdc5-associated complex (or cwf complex), a spliceosome sub-complex reminiscent of a late-stage spliceosome composed of the U2, U5 and U6 snRNAs and at least brr2, cdc5, cwf2/prp3, cwf3/syf1, cwf4/syf3, cwf5/ecm2, spp42/cwf6, cwf7/spf27, cwf8, cwf9, cwf10, cwf11, cwf12, prp45/cwf13, cwf14, cwf15, cwf16, cwf17, cwf18, cwf19, cwf20, cwf21, cwf22, cwf23, cwf24, cwf25, cwf26, cyp7/cwf27, cwf28, cwf29/ist3, lea1, msl1, prp5/cwf1, prp10, prp12/sap130, prp17, prp22, sap61, sap62, sap114, sap145, slu7, smb1, smd1, smd3, smf1, smg1 and syf2.

It localises to the nucleus. Functionally, involved in mRNA splicing. The polypeptide is Pre-mRNA-splicing factor cwf24 (cwf24) (Schizosaccharomyces pombe (strain 972 / ATCC 24843) (Fission yeast)).